The primary structure comprises 338 residues: tRNA-specific 2-thiouridylase MnmA (338 aa).

Residues 6 to 13 (ALSGGVDS) and methionine 32 each bind ATP. Cysteine 92 (nucleophile) is an active-site residue. Cysteines 92 and 186 form a disulfide. Residue glycine 116 coordinates ATP. An interaction with tRNA region spans residues 134 to 136 (KDQ). Cysteine 186 (cysteine persulfide intermediate) is an active-site residue. The tract at residues 288 to 289 (RY) is interaction with tRNA.

The protein belongs to the MnmA/TRMU family.

It is found in the cytoplasm. The catalysed reaction is S-sulfanyl-L-cysteinyl-[protein] + uridine(34) in tRNA + AH2 + ATP = 2-thiouridine(34) in tRNA + L-cysteinyl-[protein] + A + AMP + diphosphate + H(+). Its function is as follows. Catalyzes the 2-thiolation of uridine at the wobble position (U34) of tRNA, leading to the formation of s(2)U34. This is tRNA-specific 2-thiouridylase MnmA from Campylobacter fetus subsp. fetus (strain 82-40).